The sequence spans 403 residues: Farnesyl pyrophosphate synthase (403 aa).

The Mg(2+) site is built by aspartate 156 and aspartate 160. Positions aspartate 156–aspartate 160 match the DDXXD motif motif.

Belongs to the FPP/GGPP synthase family. Mg(2+) is required as a cofactor.

The enzyme catalyses isopentenyl diphosphate + (2E)-geranyl diphosphate = (2Z,6E)-farnesyl diphosphate + diphosphate. It functions in the pathway pheromone biosynthesis. Farnesyl pyrophosphate synthase involved in pheromone biosynthesis by catalyzing the formation of (2Z,6E)-farnesyl diphosphate. This is Farnesyl pyrophosphate synthase from Nezara viridula (Southern green stink bug).